Here is a 530-residue protein sequence, read N- to C-terminus: Arginine-containing cyclodipeptide synthase pthA (530 aa).

The Conserved DDXXE motif motif lies at 419–423; that stretch reads DDRAE.

It belongs to the arginine-containing cyclodipeptide synthase family.

The catalysed reaction is L-aspartyl-tRNA(Asp) + L-arginyl-tRNA(Arg) = cyclo(L-arginyl-L-aspartyl) + tRNA(Asp) + tRNA(Arg) + 2 H(+). It functions in the pathway secondary metabolite biosynthesis. Its function is as follows. Arginine-containing cyclodipeptide synthase; part of the cluster that mediates the biosynthesis of a highly modified cyclo-arginine-aspartate dipeptide (cRD). Within the pathway, pthA acts as the scaffold-generating enzyme and is responsible for formation of the cyclo-Arg-Asp diketopiperazine (cRW) from L-arginyl-tRNA(Arg) + L-aspartyl-tRNA(Asp). Additional enzymes from the cluster then further modify the cyclo-Arg-Asp diketopiperazine (cRW) scaffold. In Penicillium thymicola, this protein is Arginine-containing cyclodipeptide synthase pthA.